The chain runs to 317 residues: Apolipoprotein E (317 aa).

An N-terminal signal peptide occupies residues 1 to 18 (MKVLWAALLVTFLAGCQA). 8 tandem repeats follow at residues 80–101 (TLMD…EQLS), 102–123 (PVAE…ARLG), 124–145 (ADME…AMLG), 146–167 (QSTE…KRLL), 168–189 (RDAD…EGAE), 190–211 (RGVS…VRAA), 212–233 (TVGS…ERLR), and 234–255 (ARME…EQVA). Residues 80–255 (TLMDETMKEL…RLDEVKEQVA (176 aa)) are 8 X 22 AA approximate tandem repeats. Methionine 143 carries the methionine sulfoxide modification. A Phosphoserine modification is found at serine 147. Positions 158–168 (HLRKLRKRLLR) are LDL and other lipoprotein receptors binding. 162–165 (LRKR) contacts heparin. The interval 210–290 (AATVGSLASQ…SWFEPLVEDM (81 aa)) is lipid-binding and lipoprotein association. Residue 229–236 (GERLRARM) coordinates heparin. A homooligomerization region spans residues 266–317 (QQISLQAEAFQARLKSWFEPLVEDMQRQWAGLVEKVQAAVGASTAPVPSDNH). Positions 278 to 290 (RLKSWFEPLVEDM) are specificity for association with VLDL.

The protein belongs to the apolipoprotein A1/A4/E family. In terms of assembly, homotetramer. May interact with ABCA1; functionally associated with ABCA1 in the biogenesis of HDLs. May interact with APP/A4 amyloid-beta peptide; the interaction is extremely stable in vitro but its physiological significance is unclear. May interact with MAPT. May interact with MAP2. In the cerebrospinal fluid, interacts with secreted SORL1. Interacts with PMEL; this allows the loading of PMEL luminal fragment on ILVs to induce fibril nucleation. Post-translationally, APOE exists as multiple glycosylated and sialylated glycoforms within cells and in plasma. The extent of glycosylation and sialylation are tissue and context specific. In terms of processing, glycated in plasma VLDL. Phosphorylated by FAM20C in the extracellular medium.

Its subcellular location is the secreted. The protein resides in the extracellular space. The protein localises to the extracellular matrix. It is found in the extracellular vesicle. It localises to the endosome. Its subcellular location is the multivesicular body. APOE is an apolipoprotein, a protein associating with lipid particles, that mainly functions in lipoprotein-mediated lipid transport between organs via the plasma and interstitial fluids. APOE is a core component of plasma lipoproteins and is involved in their production, conversion and clearance. Apolipoproteins are amphipathic molecules that interact both with lipids of the lipoprotein particle core and the aqueous environment of the plasma. As such, APOE associates with chylomicrons, chylomicron remnants, very low density lipoproteins (VLDL) and intermediate density lipoproteins (IDL) but shows a preferential binding to high-density lipoproteins (HDL). It also binds a wide range of cellular receptors including the LDL receptor/LDLR, the LDL receptor-related proteins LRP1, LRP2 and LRP8 and the very low-density lipoprotein receptor/VLDLR that mediate the cellular uptake of the APOE-containing lipoprotein particles. Finally, APOE also has a heparin-binding activity and binds heparan-sulfate proteoglycans on the surface of cells, a property that supports the capture and the receptor-mediated uptake of APOE-containing lipoproteins by cells. A main function of APOE is to mediate lipoprotein clearance through the uptake of chylomicrons, VLDLs, and HDLs by hepatocytes. APOE is also involved in the biosynthesis by the liver of VLDLs as well as their uptake by peripheral tissues ensuring the delivery of triglycerides and energy storage in muscle, heart and adipose tissues. By participating in the lipoprotein-mediated distribution of lipids among tissues, APOE plays a critical role in plasma and tissues lipid homeostasis. APOE is also involved in two steps of reverse cholesterol transport, the HDLs-mediated transport of cholesterol from peripheral tissues to the liver, and thereby plays an important role in cholesterol homeostasis. First, it is functionally associated with ABCA1 in the biogenesis of HDLs in tissues. Second, it is enriched in circulating HDLs and mediates their uptake by hepatocytes. APOE also plays an important role in lipid transport in the central nervous system, regulating neuron survival and sprouting. The protein is Apolipoprotein E (APOE) of Theropithecus gelada (Gelada baboon).